Here is a 206-residue protein sequence, read N- to C-terminus: Emopamil-binding protein-like (206 aa).

4 helical membrane passes run 10 to 30 (EAGG…ALGL), 42 to 62 (GALI…GPFV), 101 to 121 (VEIL…YAIV), and 165 to 185 (CWLY…LLLW). Residues 39–184 (ADRGALIWLC…VWVLIPGLLL (146 aa)) enclose the EXPERA domain.

This sequence belongs to the EBP family. As to quaternary structure, homodimer. In terms of tissue distribution, widely expressed with highest levels in liver, lung and kidney.

The protein localises to the endoplasmic reticulum membrane. Functionally, does not possess sterol isomerase activity and does not bind sigma ligands. This chain is Emopamil-binding protein-like (EBPL), found in Homo sapiens (Human).